A 307-amino-acid polypeptide reads, in one-letter code: 4-hydroxy-3-methylbut-2-enyl diphosphate reductase (307 aa).

[4Fe-4S] cluster is bound at residue C13. 2 residues coordinate (2E)-4-hydroxy-3-methylbut-2-enyl diphosphate: H42 and H75. 2 residues coordinate dimethylallyl diphosphate: H42 and H75. Isopentenyl diphosphate contacts are provided by H42 and H75. A [4Fe-4S] cluster-binding site is contributed by C97. Residue H125 coordinates (2E)-4-hydroxy-3-methylbut-2-enyl diphosphate. Residue H125 participates in dimethylallyl diphosphate binding. Residue H125 coordinates isopentenyl diphosphate. E127 (proton donor) is an active-site residue. Residue T165 coordinates (2E)-4-hydroxy-3-methylbut-2-enyl diphosphate. Position 195 (C195) interacts with [4Fe-4S] cluster. Positions 223, 224, 225, and 267 each coordinate (2E)-4-hydroxy-3-methylbut-2-enyl diphosphate. Dimethylallyl diphosphate is bound by residues S223, S224, N225, and S267. S223, S224, N225, and S267 together coordinate isopentenyl diphosphate.

It belongs to the IspH family. [4Fe-4S] cluster is required as a cofactor.

The catalysed reaction is isopentenyl diphosphate + 2 oxidized [2Fe-2S]-[ferredoxin] + H2O = (2E)-4-hydroxy-3-methylbut-2-enyl diphosphate + 2 reduced [2Fe-2S]-[ferredoxin] + 2 H(+). It catalyses the reaction dimethylallyl diphosphate + 2 oxidized [2Fe-2S]-[ferredoxin] + H2O = (2E)-4-hydroxy-3-methylbut-2-enyl diphosphate + 2 reduced [2Fe-2S]-[ferredoxin] + 2 H(+). Its pathway is isoprenoid biosynthesis; dimethylallyl diphosphate biosynthesis; dimethylallyl diphosphate from (2E)-4-hydroxy-3-methylbutenyl diphosphate: step 1/1. The protein operates within isoprenoid biosynthesis; isopentenyl diphosphate biosynthesis via DXP pathway; isopentenyl diphosphate from 1-deoxy-D-xylulose 5-phosphate: step 6/6. Its function is as follows. Catalyzes the conversion of 1-hydroxy-2-methyl-2-(E)-butenyl 4-diphosphate (HMBPP) into a mixture of isopentenyl diphosphate (IPP) and dimethylallyl diphosphate (DMAPP). Acts in the terminal step of the DOXP/MEP pathway for isoprenoid precursor biosynthesis. The polypeptide is 4-hydroxy-3-methylbut-2-enyl diphosphate reductase (Chlamydia trachomatis serovar A (strain ATCC VR-571B / DSM 19440 / HAR-13)).